We begin with the raw amino-acid sequence, 1023 residues long: Solute carrier family 12 member 3 (1023 aa).

The Cytoplasmic portion of the chain corresponds to Met1 to Gly134. Positions Asp91–Pro131 are disordered. The discontinuously helical transmembrane segment at Trp135–Gly164 threads the bilayer. 2 residues coordinate Na(+): Leu145 and Trp148. The chain crosses the membrane as a helical span at residues Ile165–Thr186. Residues Ser187–Gly217 lie on the Cytoplasmic side of the membrane. A helical transmembrane segment spans residues Leu218–Thr240. Residues Asp241 to Asp252 lie on the Extracellular side of the membrane. The next 2 membrane-spanning stretches (helical) occupy residues Pro253–Glu277 and Trp278–Gly300. Residues Thr301–Gly335 are Extracellular-facing. The discontinuously helical transmembrane segment at Ser336–Ile357 threads the bilayer. Positions 350, 351, and 352 each coordinate chloride. Topologically, residues Ser358–Ile368 are cytoplasmic. The chain crosses the membrane as a helical span at residues Pro369–Ile390. At Gly391–Phe452 the chain is on the extracellular side. N-linked (GlcNAc...) asparagine glycosylation is found at Asn403 and Asn414. Cystine bridges form between Cys415–Cys420 and Cys429–Cys435. An N-linked (GlcNAc...) asparagine glycan is attached at Asn432. Residues Ala453–Pro476 form a helical membrane-spanning segment. Ala463, Ser466, and Ser467 together coordinate Na(+). Topologically, residues Lys477–Arg506 are cytoplasmic. The chain crosses the membrane as a helical span at residues Ala507–Ile521. Residues Ala522–Thr526 are Extracellular-facing. Residues Ile527–Asn543 traverse the membrane as a helical segment. Tyr539 provides a ligand contact to chloride. Residues Phe544–Lys566 are Cytoplasmic-facing. Transmembrane regions (helical) follow at residues Trp567–Trp586 and Ala587–Leu598. Over Leu599–Gln1023 the chain is Cytoplasmic. Residues Ser614–Gly629 form a scissor helix region. Residues Leu647, Arg654, Val676, Gly733, and Leu772 each coordinate ATP.

Belongs to the SLC12A transporter family. As to quaternary structure, homodimer; adopts a domain-swap conformation at the scissor helices connecting the transmembrane domain and C-terminal domain. In terms of tissue distribution, expressed in urinary bladder, intestine, ovary, skeletal muscle, eye, brain, and kidney.

The protein localises to the cell membrane. The catalysed reaction is chloride(out) + Na(+)(out) = chloride(in) + Na(+)(in). Its activity is regulated as follows. Inhibited by thiazide-type diuretics including polythiazide, metolazone, cyclothiazide, hydrochlorothiazide and chlorthalidone. Thiazide drugs, specifically inhibit SLC12A3/NCC transporter activity by competing with chloride for binding. Its function is as follows. Electroneutral sodium and chloride ion cotransporter, with a coupling ratio 1 Na(+):1 Cl(-). Mediates sodium and chloride reabsorption. This Pseudopleuronectes americanus (Winter flounder) protein is Solute carrier family 12 member 3 (slc12a3).